Here is a 1701-residue protein sequence, read N- to C-terminus: MGNSDSQYTLQGSKNHSNTITGAKQIPCSLKIRGIHAKEEKSLHGWGHGSNGAGYKSRSLARSCLSHFKSNQPYASRLGGPTCKVSRGVAYSTHRTNAPGKDFQGISAAFSTENGFHSVGHELADNHITSRDCNGHLLNCYGRNESIASTPPGEDRKSPRVLIKTLGKLDGCLRVEFHNGGNPSKVPAEDCSEPVQLLRYSPTLASETSPVPEARRGSSADSLPSHRPSPTDSRLRSSKGSSLSSESSWYDSPWGNAGELSEAEGSFLAPGMPDPSLHASFPPGDAKKPFNQSSSLSSLRELYKDANLGSLSPSGIRLSDEYMGTHASLSNRVSFASDIDVPSRVAHGDPIQYSSFTLPCRKPKAFVEDTAKKDSLKARMRRISDWTGSLSRKKRKLQEPRSKEGSDYFDSRSDGLNTDVQGSSQASAFLWSGGSTQILSQRSESTHAIGSDPLRQNIYENFMRELEMSRTNTENIETSTETAESSSESLSSLEQLDLLFEKEQGVVRKAGWLFFKPLVTVQKERKLELVARRKWKQYWVTLKGCTLLFYETYGKNSMDQSSAPRCALFAEDSIVQSVPEHPKKENVFCLSNSFGDVYLFQATSQTDLENWVTAVHSACASLFAKKHGKEDTLRLLKNQTKNLLQKIDMDSKMKKMAELQLSVVSDPKNRKAIENQIQQWEQNLEKFHMDLFRMRCYLASLQGGELPNPKSLLAAASRPSKLALGRLGILSVSSFHALVCSRDDSALRKRTLSLTQRGRNKKGIFSSLKGLDTLARKGKEKRPSITQVDELLHIYGSTVDGVPRDNAWEIQTYVHFQDNHGVTVGIKPEHRVEDILTLACKMRQLEPSHYGLQLRKLVDDNVEYCIPAPYEYMQQQVYDEIEVFPLNVYDVQLTKTGSVCDFGFAVTAQVDERQHLSRIFISDVLPDGLAYGEGLRKGNEIMTLNGEAVSDLDLKQMEALFSEKSVGLTLIARPPDTKATLCTSWSDSDLFSRDQKSLLPPPNQSQLLEEFLDNFKKNTANDFSNVPDITTGLKRSQTDGTLDQVSHREKMEQTFRSAEQITALCRSFNDSQANGMEGPRENQDPPPRSLARHLSDADRLRKVIQELVDTEKSYVKDLSCLFELYLEPLQNETFLTQDEMESLFGSLPEMLEFQKVFLETLEDGISASSDFNTLETPSQFRKLLFSLGGSFLYYADHFKLYSGFCANHIKVQKVLERAKTDKAFKAFLDARNPTKQHSSTLESYLIKPVQRVLKYPLLLKELVSLTDQESEEHYHLTEALKAMEKVASHINEMQKIYEDYGTVFDQLVAEQSGTEKEVTELSMGELLMHSTVSWLNPFLSLGKARKDLELTVFVFKRAVILVYKENCKLKKKLPSNSRPAHNSTDLDPFKFRWLIPISALQVRLGNPAGTENNSIWELIHTKSEIEGRPETIFQLCCSDSESKTNIVKVIRSILRENFRRHIKCELPLEKTCKDRLVPLKNRVPVSAKLASSRSLKVLKNSSSNEWTGETGKGTLLDSDEGSLSSGTQSSGCPTAEGRQDSKSTSPGKYPHPGLADFADNLIKESDILSDEDDDHRQTVKQGSPTKDIEIQFQRLRISEDPDVHPEAEQQPGPESGEGQKGGEQPKLVRGHFCPIKRKANSTKRDRGTLLKAQIRHQSLDSQSENATIDLNSVLEREFSVQSLTSVVSEECFYETESHGKS.

Disordered stretches follow at residues 1–21, 201–250, 265–293, and 389–417; these read MGNS…NTIT, SPTL…SSWY, GSFL…FNQS, and SLSR…DGLN. Gly-2 is lipidated: N-myristoyl glycine. Over residues 238 to 248 the composition is skewed to low complexity; sequence SKGSSLSSESS. The segment covering 397-413 has biased composition (basic and acidic residues); it reads LQEPRSKEGSDYFDSRS. The PH 1 domain maps to 506-620; sequence VVRKAGWLFF…WVTAVHSACA (115 aa). Residues 628–695 adopt a coiled-coil conformation; that stretch reads GKEDTLRLLK…KFHMDLFRMR (68 aa). One can recognise an RBD domain in the interval 810-881; the sequence is IQTYVHFQDN…YMQQQVYDEI (72 aa). The region spanning 890–976 is the PDZ domain; it reads DVQLTKTGSV…GLTLIARPPD (87 aa). A disordered region spans residues 1070 to 1092; that stretch reads DSQANGMEGPRENQDPPPRSLAR. Positions 1099 to 1293 constitute a DH domain; sequence RLRKVIQELV…EKVASHINEM (195 aa). A PH 2 domain is found at 1347–1478; the sequence is DLELTVFVFK…EKTCKDRLVP (132 aa). Disordered regions lie at residues 1500–1556 and 1568–1628; these read NSSS…GLAD and LSDE…PKLV. Residues 1513 to 1527 are compositionally biased toward low complexity; sequence GTLLDSDEGSLSSGT. At Ser-1583 the chain carries Phosphoserine. A compositionally biased stretch (basic and acidic residues) spans 1596-1607; that stretch reads RISEDPDVHPEA. Position 1648 is a phosphothreonine (Thr-1648).

It belongs to the TIAM family. Interacts with MAP1A, MAP1B, PARP1 and YWHAE. Interacts with CD44, PARD3 and MAPK8IP2. In terms of processing, phosphorylated on serine and threonine residues. Phosphorylated on Thr-1648 by Rho-kinase. Its phosphorylation by Rho-kinase inhibits its guanine nucleotide exchange activity, its interaction with MAP1A, MAP1B, PARP1 and YWHAE and reduces its ability to promote neurite growth. Expressed in the occipital, frontal and temporal lobes, cerebellum, putamen and testis.

The protein localises to the cytoplasm. It localises to the cell projection. Its subcellular location is the lamellipodium. It is found in the filopodium. The protein resides in the growth cone. The protein localises to the neuron projection. It localises to the perikaryon. Modulates the activity of RHO-like proteins and connects extracellular signals to cytoskeletal activities. Acts as a GDP-dissociation stimulator protein that stimulates the GDP-GTP exchange activity of RHO-like GTPases and activates them. Mediates extracellular laminin signals to activate Rac1, contributing to neurite growth. Involved in lamellipodial formation and advancement of the growth cone of embryonic hippocampal neurons. Promotes migration of neurons in the cerebral cortex. When overexpressed, induces membrane ruffling accompanied by the accumulation of actin filaments along the altered plasma membrane. Activates specifically RAC1, but not CDC42 and RHOA. In Homo sapiens (Human), this protein is Rho guanine nucleotide exchange factor TIAM2 (TIAM2).